Here is a 130-residue protein sequence, read N- to C-terminus: Small ribosomal subunit protein bS6 (130 aa).

The disordered stretch occupies residues 100-130 (SPMVKAKDERRERHDFASEANDDSEAGDSEE). The segment covering 104 to 116 (KAKDERRERHDFA) has biased composition (basic and acidic residues). The span at 119-130 (ANDDSEAGDSEE) shows a compositional bias: acidic residues.

Belongs to the bacterial ribosomal protein bS6 family.

Its function is as follows. Binds together with bS18 to 16S ribosomal RNA. In Yersinia pestis (strain Pestoides F), this protein is Small ribosomal subunit protein bS6.